A 140-amino-acid chain; its full sequence is Large ribosomal subunit protein uL16 (140 aa).

Belongs to the universal ribosomal protein uL16 family. In terms of assembly, part of the 50S ribosomal subunit.

Binds 23S rRNA and is also seen to make contacts with the A and possibly P site tRNAs. The chain is Large ribosomal subunit protein uL16 from Syntrophus aciditrophicus (strain SB).